Consider the following 217-residue polypeptide: Trimethylamine corrinoid protein 2 (217 aa).

The 92-residue stretch at 1–92 (MAGKEEIIAK…EMEKRKAKTT (92 aa)) folds into the B12-binding N-terminal domain. Residues 94–217 (LGTVIIGTIE…VNKIKAAIKS (124 aa)) enclose the B12-binding domain. A methylcob(III)alamin-binding site is contributed by His107.

The protein belongs to the methylamine corrinoid protein family. In terms of assembly, can form a complex with MttB.

It functions in the pathway one-carbon metabolism; methanogenesis from trimethylamine. Its function is as follows. Acts probably as a methyl group carrier between MttB and either MtbA or MtaA. The chain is Trimethylamine corrinoid protein 2 (mttC2) from Methanosarcina acetivorans (strain ATCC 35395 / DSM 2834 / JCM 12185 / C2A).